Here is a 346-residue protein sequence, read N- to C-terminus: tRNA pseudouridine synthase D (346 aa).

Asp-81 (nucleophile) is an active-site residue. The TRUD domain occupies 157-303 (GVPNYFGLQR…MKHERRILRL (147 aa)).

The protein belongs to the pseudouridine synthase TruD family.

The enzyme catalyses uridine(13) in tRNA = pseudouridine(13) in tRNA. In terms of biological role, responsible for synthesis of pseudouridine from uracil-13 in transfer RNAs. This chain is tRNA pseudouridine synthase D, found in Stutzerimonas stutzeri (strain A1501) (Pseudomonas stutzeri).